The following is a 410-amino-acid chain: Phytoene synthase 1, chloroplastic (410 aa).

The transit peptide at 1–62 (MAIILVRAAS…EAGRPSPAVY (62 aa)) directs the protein to the chloroplast.

Belongs to the phytoene/squalene synthase family. Monomer. Expressed in embryos, endosperm and seedling leaves. Expressed in leaves and endosperm.

The protein resides in the plastid. The protein localises to the chloroplast stroma. The catalysed reaction is 2 (2E,6E,10E)-geranylgeranyl diphosphate = 15-cis-phytoene + 2 diphosphate. It participates in carotenoid biosynthesis; phytoene biosynthesis; all-trans-phytoene from geranylgeranyl diphosphate: step 1/1. In terms of biological role, catalyzes the conversion of geranylgeranyl diphosphate to phytoene. Mediates the first committed step in carotenoid biosynthesis. The chain is Phytoene synthase 1, chloroplastic from Zea mays (Maize).